The sequence spans 1749 residues: MAAAAGGPCVRSSRELWTILLGRSALRELSQIEAELNKHWRRLLEGLSYYKPPSPSSAEKVKANKDVASPLKELGLRISKFLGLDEEQSVQLLQCYLQEDYRGTRDSVKTVLQDERQSQALILKIADYYYEERTCILRCVLHLLTYFQDERHPYRVEYADCVDKLEKELVSKYRQQFEELYKTEAPTWETHGNLMTERQVSRWFVQCLREQSMLLEIIFLYYAYFEMAPSDLLVLTKMFKEQGFGSRQTNRHLVDETMDPFVDRIGYFSALILVEGMDIESLHKCALDDRRELHQFAQDGLICQDMDCLMLTFGDIPHHAPVLLAWALLRHTLNPEETSSVVRKIGGTAIQLNVFQYLTRLLQSLASGGNDCTTSTACMCVYGLLSFVLTSLELHTLGNQQDIIDTACEVLADPSLPELFWGTEPTSGLGIILDSVCGMFPHLLSPLLQLLRALVSGKSTAKKVYSFLDKMSFYNELYKHKPHDVISHEDGTLWRRQTPKLLYPLGGQTNLRIPQGTVGQVMLDDRAYLVRWEYSYSSWTLFTCEIEMLLHVVSTADVIQHCQRVKPIIDLVHKVISTDLSIADCLLPITSRIYMLLQRLTTVISPPVDVIASCVNCLTVLAARNPAKVWTDLRHTGFLPFVAHPVSSLSQMISAEGMNAGGYGNLLMNSEQPQGEYGVTIAFLRLITTLVKGQLGSTQSQGLVPCVMFVLKEMLPSYHKWRYNSHGVREQIGCLILELIHAILNLCHETDLHSSHTPSLQFLCICSLAYTEAGQTVINIMGIGVDTIDMVMAAQPRSDGAEGQGQGQLLIKTVKLAFSVTNNVIRLKPPSNVVSPLEQALSQHGAHGNNLIAVLAKYIYHKHDPALPRLAIQLLKRLATVAPMSVYACLGNDAAAIRDAFLTRLQSKIEDMRIKVMILEFLTVAVETQPGLIELFLNLEVKDGSDGSKEFSLGMWSCLHAVLELIDSQQQDRYWCPPLLHRAAIAFLHALWQDRRDSAMLVLRTKPKFWENLTSPLFGTLSPPSETSEPSILETCALIMKIICLEIYYVVKGSLDQSLKDTLKKFSIEKRFAYWSGYVKSLAVHVAETEGSSCTSLLEYQMLVSAWRMLLIIATTHADIMHLTDSVVRRQLFLDVLDGTKALLLVPASVNCLRLGSMKCTLLLILLRQWKRELGSVDEILGPLTEILEGVLQADQQLMEKTKAKVFSAFITVLQMKEMKVSDIPQYSQLVLNVCETLQEEVIALFDQTRHSLALGSATEDKDSMETDDCSRSRHRDQRDGVCVLGLHLAKELCEVDEDGDSWLQVTRRLPILPTLLTTLEVSLRMKQNLHFTEATLHLLLTLARTQQGATAVAGAGITQSICLPLLSVYQLSTNGTAQTPSASRKSLDAPSWPGVYRLSMSLMEQLLKTLRYNFLPEALDFVGVHQERTLQCLNAVRTVQSLACLEEADHTVGFILQLSNFMKEWHFHLPQLMRDIQVNLGYLCQACTSLLHSRKMLQHYLQNKNGDGLPSAVAQRVQRPPSAASAAPSSSKQPAADTEASEQQALHTVQYGLLKILSKTLAALRHFTPDVCQILLDQSLDLAEYNFLFALSFTTPTFDSEVAPSFGTLLATVNVALNMLGELDKKKEPLTQAVGLSTQAEGTRTLKSLLMFTMENCFYLLISQAMRYLRDPAVHPRDKQRMKQELSSELSTLLSSLSRYFRRGAPSSPATGVLPSPQGKSTSLSKASPESQEPLIQLVQAFVRHMQR.

Residue Ala2 is modified to N-acetylalanine. Disordered stretches follow at residues 1514-1542 and 1707-1733; these read VAQR…TEAS and PSSP…PESQ. Positions 1521-1537 are enriched in low complexity; sequence PPSAASAAPSSSKQPAA. Residues Ser1523 and Ser1709 each carry the phosphoserine modification. Phosphothreonine is present on Thr1712. Position 1717 is a phosphoserine (Ser1717). Residues 1719-1732 show a composition bias toward polar residues; it reads QGKSTSLSKASPES.

The protein belongs to the Nup188 family. In terms of assembly, part of the nuclear pore complex (NPC).

It localises to the nucleus. Its subcellular location is the nuclear pore complex. Functionally, component of the nuclear pore complex (NPC), a complex required for the trafficking across the nuclear envelope. Required for proper protein transport into the nucleus. The sequence is that of Nucleoporin NUP188 (NUP188) from Homo sapiens (Human).